A 256-amino-acid chain; its full sequence is 5-oxoprolinase subunit A 2 (256 aa).

It belongs to the LamB/PxpA family. As to quaternary structure, forms a complex composed of PxpA, PxpB and PxpC.

The enzyme catalyses 5-oxo-L-proline + ATP + 2 H2O = L-glutamate + ADP + phosphate + H(+). Functionally, catalyzes the cleavage of 5-oxoproline to form L-glutamate coupled to the hydrolysis of ATP to ADP and inorganic phosphate. The chain is 5-oxoprolinase subunit A 2 from Bradyrhizobium diazoefficiens (strain JCM 10833 / BCRC 13528 / IAM 13628 / NBRC 14792 / USDA 110).